Here is a 244-residue protein sequence, read N- to C-terminus: 3-deoxy-manno-octulosonate cytidylyltransferase (244 aa).

This sequence belongs to the KdsB family.

Its subcellular location is the cytoplasm. The enzyme catalyses 3-deoxy-alpha-D-manno-oct-2-ulosonate + CTP = CMP-3-deoxy-beta-D-manno-octulosonate + diphosphate. It functions in the pathway nucleotide-sugar biosynthesis; CMP-3-deoxy-D-manno-octulosonate biosynthesis; CMP-3-deoxy-D-manno-octulosonate from 3-deoxy-D-manno-octulosonate and CTP: step 1/1. Its pathway is bacterial outer membrane biogenesis; lipopolysaccharide biosynthesis. Its function is as follows. Activates KDO (a required 8-carbon sugar) for incorporation into bacterial lipopolysaccharide in Gram-negative bacteria. The protein is 3-deoxy-manno-octulosonate cytidylyltransferase of Flavobacterium johnsoniae (strain ATCC 17061 / DSM 2064 / JCM 8514 / BCRC 14874 / CCUG 350202 / NBRC 14942 / NCIMB 11054 / UW101) (Cytophaga johnsonae).